We begin with the raw amino-acid sequence, 277 residues long: Elongation factor Ts (277 aa).

An involved in Mg(2+) ion dislocation from EF-Tu region spans residues 79-82; the sequence is TDFV.

Belongs to the EF-Ts family.

The protein localises to the cytoplasm. Functionally, associates with the EF-Tu.GDP complex and induces the exchange of GDP to GTP. It remains bound to the aminoacyl-tRNA.EF-Tu.GTP complex up to the GTP hydrolysis stage on the ribosome. This Phytoplasma australiense protein is Elongation factor Ts.